The primary structure comprises 536 residues: GATA zinc finger domain-containing protein 9 (536 aa).

2 stretches are compositionally biased toward polar residues: residues 1-20 and 36-55; these read MTSFLLFNPGSLQQQQQPHS and CQSSFSTPLGGSNGINNPNA. Disordered stretches follow at residues 1–77, 183–211, 237–258, 273–342, and 370–423; these read MTSF…LSGS, SSSLSSEDDDCCYETEEDDNGEDGEVVRS, RSAFKKNKKDYHHGSSAGGGGS, QLHY…GFVQ, and ALFS…NISS. Positions 56-72 are enriched in low complexity; the sequence is TTNNTTTTTTTTTTTTN. The segment covering 188 to 206 has biased composition (acidic residues); sequence SEDDDCCYETEEDDNGEDG. Over residues 237 to 247 the composition is skewed to basic residues; the sequence is RSAFKKNKKDY. The segment covering 273 to 283 has biased composition (polar residues); it reads QLHYSNSMTDN. Composition is skewed to low complexity over residues 318-335 and 379-399; these read SNSNNNNNNNNNNNNNNN and PSPTLGSSCGSSSPGLNNSGN. The GATA-type zinc-finger motif lies at 479 to 504; it reads CRHCGTTDTPEWRRGPDGRKSLCNAC.

In Dictyostelium discoideum (Social amoeba), this protein is GATA zinc finger domain-containing protein 9 (gtaI).